A 328-amino-acid polypeptide reads, in one-letter code: Transcription factor bHLH84 (328 aa).

The disordered stretch occupies residues 145–248; it reads QCESSKKRTR…ASRGAATDPQ (104 aa). The segment covering 220–229 has biased composition (basic and acidic residues); sequence LSKEDGEDSK. The region spanning 243–292 is the bHLH domain; sequence AATDPQSLYARKRRERINERLRILQHLVPNGTKVDISTMLEEAVQYVKFL.

This sequence belongs to the bHLH protein family. In terms of assembly, homodimer.

The protein localises to the nucleus. The protein is Transcription factor bHLH84 (BHLH84) of Arabidopsis thaliana (Mouse-ear cress).